The following is a 254-amino-acid chain: Probable glucose-1-phosphate cytidylyltransferase (254 aa).

Residues 6–10 (LCGGK), 11–13 (GTR), Lys-23, Thr-103, Arg-108, and Gly-126 contribute to the substrate site. Mg(2+) is bound by residues Asp-127 and Asp-232.

This sequence belongs to the glucose-1-phosphate cytidylyltransferase family. The cofactor is Mg(2+).

It carries out the reaction alpha-D-glucose 1-phosphate + CTP + H(+) = CDP-D-glucose + diphosphate. Catalyzes the transfer of a CMP moiety from CTP to glucose 1-phosphate. The sequence is that of Probable glucose-1-phosphate cytidylyltransferase (yfnH) from Bacillus subtilis (strain 168).